The chain runs to 690 residues: CREB-H transcription factor homolog let-607 (690 aa).

Disordered stretches follow at residues 87 to 118 (NDNCYSLSPPDSGSLPISPASTSPSSYHSSGG), 166 to 192 (SAVHQNQQQQQRRLNQAGFPHQNSNGL), and 205 to 253 (PASI…KYPP). 3 stretches are compositionally biased toward low complexity: residues 100–116 (SLPISPASTSPSSYHSS), 170–181 (QNQQQQQRRLNQ), and 213–236 (PSSSFNPQSTSSTPATSSSSSSST). The bZIP domain occupies 284 to 347 (DLKRIRRKIR…QSVISQLKKL (64 aa)). A basic motif region spans residues 286-321 (KRIRRKIRNKRSAQTSRKRKQDYIEQLEDRVSESTK). Residues 295–350 (KRSAQTSRKRKQDYIEQLEDRVSESTKENQALKQQIERLSSENQSVISQLKKLQAQ) adopt a coiled-coil conformation. The interval 326 to 333 (LKQQIERL) is leucine-zipper. Positions 451–464 (HNNSKYPASGNQNH) are enriched in polar residues. 2 disordered regions span residues 451–495 (HNNS…SMYR) and 509–536 (GARKGSSTSSSSASSVASSTSTSSATSP). 2 stretches are compositionally biased toward low complexity: residues 480–492 (QPKQSYQQQHQPS) and 514–535 (SSTSSSSASSVASSTSTSSATS).

It belongs to the bZIP family.

It is found in the nucleus. Probable transcription factor, required during migration of the gonadal distal tip cells (DTC). Probably regulates cell adhesion of DTCs via modulation of expression of genes involved in integrin-mediated adhesion, including tln-1, src-1, and integrin pat-2. Modulates expression of genes involved in protein trafficking during embryogenesis, including emo-1, sec-61, calu-1, sec-24.1, enpl-1, sar-1 and tfg-1. The protein is CREB-H transcription factor homolog let-607 of Caenorhabditis elegans.